Here is a 212-residue protein sequence, read N- to C-terminus: Cytidylate kinase (212 aa).

An ATP-binding site is contributed by 7 to 15 (GPAASGKGT).

It belongs to the cytidylate kinase family. Type 1 subfamily.

It localises to the cytoplasm. It carries out the reaction CMP + ATP = CDP + ADP. The enzyme catalyses dCMP + ATP = dCDP + ADP. This is Cytidylate kinase from Rhodopseudomonas palustris (strain BisB18).